The primary structure comprises 217 residues: Non-structural protein NS3 (217 aa).

This sequence belongs to the orbivirus NS3 family.

May play a role in the release of virions from infected cells. In Camelus dromedarius (Dromedary), this protein is Non-structural protein NS3 (Segment-10).